The following is a 63-amino-acid chain: Arabinogalactan protein 41 (63 aa).

Positions 1 to 27 (MSGSRLFFGVSTIVSIIFAILLPMAHA) are cleaved as a signal peptide. At Gln28 the chain carries Pyrrolidone carboxylic acid. 4-hydroxyproline occurs at positions 32, 34, and 36. Residues Pro32, Pro34, and Pro36 are each glycosylated (O-linked (Ara...) hydroxyproline). A lipid anchor (GPI-anchor amidated serine) is attached at Ser38. A propeptide spans 39–63 (DGTTIDQGIAYVLMLVALVLTYLIH) (removed in mature form).

This sequence belongs to the AG-peptide AGP family. In terms of processing, contains 4-hydroxyproline; hydroxylated on Pro-32, Pro-34 and Pro-36. O-glycosylated on hydroxyprolines; noncontiguous hydroxylproline residues are glycosylated with arabinogalactan.

It localises to the cell membrane. Its function is as follows. Proteoglycan that seems to be implicated in diverse developmental roles such as differentiation, cell-cell recognition, embryogenesis and programmed cell death. In Arabidopsis thaliana (Mouse-ear cress), this protein is Arabinogalactan protein 41.